The chain runs to 768 residues: Dual specificity calcium/calmodulin-dependent 3',5'-cyclic nucleotide phosphodiesterase 1C (768 aa).

The residue at position 1 (M1) is an N-acetylmethionine. The interval 183–206 (EKPRFKSIVHAVQAGIFVERMYRR) is calmodulin-binding. The 378-residue stretch at 211–588 (VGLSYPPAVI…ERWRAKVPKE (378 aa)) folds into the PDEase domain. Residue H288 is the Proton donor of the active site. Zn(2+) contacts are provided by H292, H328, D329, and D436. D329 lines the Mg(2+) pocket. 2 disordered regions span residues 513 to 557 (LIDE…INNS) and 584 to 719 (KVPK…PPLR). 2 stretches are compositionally biased toward polar residues: residues 516 to 536 (ETSQ…INSS) and 543 to 557 (VKSS…INNS). Residues 584–614 (KVPKEEKAKKEAEEKARLAAEEKQKEMEAKS) show a composition bias toward basic and acidic residues. A compositionally biased stretch (polar residues) spans 631 to 641 (ETKGQVNGTRT). Basic and acidic residues-rich tracts occupy residues 642-659 (SKGD…KAGE) and 665-692 (DLKD…DGTK). Over residues 698-712 (SPAPSTSSTSRLTLP) the composition is skewed to low complexity.

Belongs to the cyclic nucleotide phosphodiesterase family. PDE1 subfamily. As to quaternary structure, homodimer. Zn(2+) serves as cofactor. It depends on Mg(2+) as a cofactor. In terms of tissue distribution, highly expressed in olfactory epithelium and at moderate levels, in cerebellum, as well as weakly in forebrain, testis, heart and lung. In the olfactory epithelium, expressed by sensory neurons, but not epithelial cells.

It is found in the lysosome. The enzyme catalyses a nucleoside 3',5'-cyclic phosphate + H2O = a nucleoside 5'-phosphate + H(+). It carries out the reaction 3',5'-cyclic GMP + H2O = GMP + H(+). It catalyses the reaction 3',5'-cyclic AMP + H2O = AMP + H(+). With respect to regulation, type I PDE are activated by the binding of calmodulin in the presence of Ca(2+). Functionally, calmodulin-dependent cyclic nucleotide phosphodiesterase with a dual specificity for the second messengers cAMP and cGMP, which are key regulators of many important physiological processes. Has a high affinity for both cAMP and cGMP. Modulates the amplitude and duration of the cAMP signal in sensory cilia in response to odorant stimulation, hence contributing to the generation of action potentials. Regulates smooth muscle cell proliferation. Regulates the stability of growth factor receptors, including PDGFRB. This is Dual specificity calcium/calmodulin-dependent 3',5'-cyclic nucleotide phosphodiesterase 1C from Rattus norvegicus (Rat).